The chain runs to 440 residues: Trigger factor (440 aa).

The 94-residue stretch at lysine 160–proline 253 folds into the PPIase FKBP-type domain.

It belongs to the FKBP-type PPIase family. Tig subfamily.

The protein resides in the cytoplasm. The enzyme catalyses [protein]-peptidylproline (omega=180) = [protein]-peptidylproline (omega=0). In terms of biological role, involved in protein export. Acts as a chaperone by maintaining the newly synthesized protein in an open conformation. Functions as a peptidyl-prolyl cis-trans isomerase. This chain is Trigger factor, found in Chlorobium chlorochromatii (strain CaD3).